The primary structure comprises 517 residues: Crotonobetaine/carnitine--CoA ligase (517 aa).

This sequence belongs to the ATP-dependent AMP-binding enzyme family.

The catalysed reaction is 4-(trimethylamino)butanoate + ATP + CoA = 4-(trimethylamino)butanoyl-CoA + AMP + diphosphate. The enzyme catalyses crotonobetaine + ATP + CoA = crotonobetainyl-CoA + AMP + diphosphate. It carries out the reaction (R)-carnitine + ATP + CoA = (R)-carnitinyl-CoA + AMP + diphosphate. It functions in the pathway amine and polyamine metabolism; carnitine metabolism. In terms of biological role, catalyzes the transfer of CoA to carnitine, generating the initial carnitinyl-CoA needed for the CaiB reaction cycle. Also has activity toward crotonobetaine and gamma-butyrobetaine. The polypeptide is Crotonobetaine/carnitine--CoA ligase (Escherichia coli (strain ATCC 8739 / DSM 1576 / NBRC 3972 / NCIMB 8545 / WDCM 00012 / Crooks)).